Here is a 749-residue protein sequence, read N- to C-terminus: MFNEITKSVTWNGQVLELSTGKIARQADGAVTVKMGNSVLLCTAVVANKAKEGIGFLPLTINYREMAYAAGKIPGGFFKHEGKASDREVLVSRLIDRPIRPLFHPAFVNETHVTCSVLSYDPETPVDILAIIGASAALSLSPAPYLEIVAASKVGLINGEFVLNPTLALLKTSQLDLVVAGTSDSVMMVESEAHLLSEEQMLEAVKFGFESFQPVIKIIKELAEEAKKPKLEMQALYPASLKKEIEKLFVKEIEQAFAIKSKQERSTNLDLIPEKVLTHFVSDIENKKYSNYQIESALKAIESDILRNEILEKNRRIDGRSTTDIRQIACEIGLLPSAHGSALFTRGETQSLVSTTFGTSLDEQIVDSLEGEYKERFMLNYIFPPYSVNEAMPMKAPSRREVGHGKLAWRAINPILPNKVQFPYSIRVVAETTESNGSSSMATVCGSSLALMYAGVPIKAPVAGIAMGLVKEGKNFAVLSDILGDEDYFGDMDFKVAGTSEGITALQMDIKISGVDFKIMKVALEQARLGRLHILEQMNKVISKPNNELSKNAPSTTTIKIDKDKIRDIIGPGGKIIKEICETSGAKIDISDDGTVSVYASDRDKLKVALDKIKAIVVEPEIGEIFNGTVVKVLDSGAFINYVGNKDGFVHISEVSGERIETVSSVLKQGDIVKVKLIGFDNKGKAKLTIKNADKDKSSNNTKPKTNVNNTNKDNSEPEQRRDSSKKRAWNEDNNAETAEVITERKYFN.

Positions 487 and 493 each coordinate Mg(2+). The KH domain maps to 554–613 (PSTTTIKIDKDKIRDIIGPGGKIIKEICETSGAKIDISDDGTVSVYASDRDKLKVALDKI). Residues 623-691 (GEIFNGTVVK…NKGKAKLTIK (69 aa)) form the S1 motif domain. A disordered region spans residues 691–749 (KNADKDKSSNNTKPKTNVNNTNKDNSEPEQRRDSSKKRAWNEDNNAETAEVITERKYFN). Positions 699 to 713 (SNNTKPKTNVNNTNK) are enriched in low complexity. A compositionally biased stretch (basic and acidic residues) spans 714-723 (DNSEPEQRRD).

This sequence belongs to the polyribonucleotide nucleotidyltransferase family. Requires Mg(2+) as cofactor.

The protein resides in the cytoplasm. The enzyme catalyses RNA(n+1) + phosphate = RNA(n) + a ribonucleoside 5'-diphosphate. Its function is as follows. Involved in mRNA degradation. Catalyzes the phosphorolysis of single-stranded polyribonucleotides processively in the 3'- to 5'-direction. This chain is Polyribonucleotide nucleotidyltransferase, found in Rickettsia conorii (strain ATCC VR-613 / Malish 7).